The primary structure comprises 116 residues: C-C motif chemokine 6 (116 aa).

Positions 1–21 (MRNSKTAISFFILVAVLGSQA) are cleaved as a signal peptide. 3 disulfides stabilise this stretch: C50/C73, C51/C89, and C60/C100.

This sequence belongs to the intercrine beta (chemokine CC) family. In terms of processing, the N-terminal is proteolytically cleaved by proteases associated with inflammatory responses. The processed forms CL6(22-95) and CCL6(23-95) show increase in CCR1-mediated signaling and chemotaxis assays in vitro. In terms of tissue distribution, expressed in myelopoietic bone marrow cultures stimulated by GM-CSF.

The protein localises to the secreted. In terms of biological role, chemotactic factor that attracts mostly macrophage, but it can also attract B cells, CD4(+) lymphocytes and eosinophils. This is C-C motif chemokine 6 (Ccl6) from Mus musculus (Mouse).